Consider the following 297-residue polypeptide: 4-diphosphocytidyl-2-C-methyl-D-erythritol kinase (297 aa).

Residue K14 is part of the active site. An ATP-binding site is contributed by 99–109; that stretch reads PVAAGIGGGSA. D141 is an active-site residue.

This sequence belongs to the GHMP kinase family. IspE subfamily.

It carries out the reaction 4-CDP-2-C-methyl-D-erythritol + ATP = 4-CDP-2-C-methyl-D-erythritol 2-phosphate + ADP + H(+). It functions in the pathway isoprenoid biosynthesis; isopentenyl diphosphate biosynthesis via DXP pathway; isopentenyl diphosphate from 1-deoxy-D-xylulose 5-phosphate: step 3/6. Catalyzes the phosphorylation of the position 2 hydroxy group of 4-diphosphocytidyl-2C-methyl-D-erythritol. The protein is 4-diphosphocytidyl-2-C-methyl-D-erythritol kinase of Bradyrhizobium diazoefficiens (strain JCM 10833 / BCRC 13528 / IAM 13628 / NBRC 14792 / USDA 110).